Reading from the N-terminus, the 96-residue chain is Co-chaperonin GroES (96 aa).

It belongs to the GroES chaperonin family. As to quaternary structure, heptamer of 7 subunits arranged in a ring. Interacts with the chaperonin GroEL.

Its subcellular location is the cytoplasm. Its function is as follows. Together with the chaperonin GroEL, plays an essential role in assisting protein folding. The GroEL-GroES system forms a nano-cage that allows encapsulation of the non-native substrate proteins and provides a physical environment optimized to promote and accelerate protein folding. GroES binds to the apical surface of the GroEL ring, thereby capping the opening of the GroEL channel. In Vibrio campbellii (strain ATCC BAA-1116), this protein is Co-chaperonin GroES.